Reading from the N-terminus, the 487-residue chain is N-succinylglutamate 5-semialdehyde dehydrogenase (487 aa).

Residue 221 to 226 coordinates NAD(+); the sequence is GSSRTG. Active-site residues include glutamate 244 and cysteine 278.

Belongs to the aldehyde dehydrogenase family. AstD subfamily.

The enzyme catalyses N-succinyl-L-glutamate 5-semialdehyde + NAD(+) + H2O = N-succinyl-L-glutamate + NADH + 2 H(+). Its pathway is amino-acid degradation; L-arginine degradation via AST pathway; L-glutamate and succinate from L-arginine: step 4/5. Catalyzes the NAD-dependent reduction of succinylglutamate semialdehyde into succinylglutamate. This chain is N-succinylglutamate 5-semialdehyde dehydrogenase, found in Pseudomonas entomophila (strain L48).